A 94-amino-acid chain; its full sequence is Protein S100-A1 (94 aa).

EF-hand domains follow at residues 13–48 (INVFHAHSGQEGDKYKLSKKELKDLLQTELSGFLDV) and 50–85 (KDADAVDKVMKELDENGDGEVDFKEYVVLVAALTVA). Ca(2+)-binding residues include lysine 28, glutamate 33, aspartate 63, asparagine 65, aspartate 67, glutamate 69, and glutamate 74. Cysteine 86 is subject to S-nitrosocysteine.

It belongs to the S-100 family. In terms of assembly, dimer of either two alpha chains, or two beta chains, or one alpha and one beta chain. Also forms heterodimers with S100P. Interacts with AGER. Interacts with CAPZA1. Interacts with FKBP4. Interacts with RYR1 and RYR2. Interacts with CACYBP in a calcium-dependent manner. Interacts with PPP5C (via TPR repeats); the interaction is calcium-dependent and modulates PPP5C activity. Interacts with ATP2A2 and PLN in a Ca(2+)-dependent manner. Interacts with mitochondrial F1-ATPase subunits ATP5F1A and ATP5F1B; these interactions increase F1-ATPase activity. Post-translationally, glutathionylated; glutathionylation increases affinity to calcium about 10-fold. In terms of tissue distribution, expressed in the cardiac and the skeletal muscles.

It is found in the cytoplasm. Its subcellular location is the sarcoplasmic reticulum. It localises to the mitochondrion. In terms of biological role, small calcium binding protein that plays important roles in several biological processes such as Ca(2+) homeostasis, chondrocyte biology and cardiomyocyte regulation. In response to an increase in intracellular Ca(2+) levels, binds calcium which triggers conformational changes. These changes allow interactions with specific target proteins and modulate their activity. Regulates a network in cardiomyocytes controlling sarcoplasmic reticulum Ca(2+) cycling and mitochondrial function through interaction with the ryanodine receptors RYR1 and RYR2, sarcoplasmic reticulum Ca(2+)-ATPase/ATP2A2 and mitochondrial F1-ATPase. Facilitates diastolic Ca(2+) dissociation and myofilament mechanics in order to improve relaxation during diastole. The sequence is that of Protein S100-A1 (S100a1) from Mus musculus (Mouse).